A 557-amino-acid polypeptide reads, in one-letter code: MTVCRFWQQGYCRNGNACKFEHPPKGGQNYNRFGALSGSGQGMGGRVSEPPHYPGLSEDAIQKDLTSELPTWILSCYGPGRDAPEQLFGGYPREQSFEEIRLHFYNGLMAGNPQGALNEIQAAYQAAQQQIQNTLQNIPAAVQFILDAANKHPNRIDICRESSKGSSTGGSVFGRNVNPFQQSSAAPLNPFGAPSTPSTSAFGQPSPLGQKSSAFGTPAFGQPSQPVSAFGKPSALGGGSAFGSPQTGSTFGQPSVLGAKPSAFGQPAFGQPAFGQPAFGQSAFGQPSALGPKPGAFGTSAGSAFGASTTTAPSPFGAAAQATQPANPFGQPSQQAANSFGKPAAPASAFGQPSTTTAQNPFGQPSTQSSAFGQQQPQQAGTFGSPSLFGQQQQQPSNVFGQPSTTSAFGSQAATSGFSQLGNATSTIGASPAGAQAPASKSPYHPGSTRQHPDLLSYATKNPAGGLDTFKGKPVVYETPKGAAKPVPHIRQFDGTLVRIWMPDGAPAYTADTEAEDPKVYEDEGVKRQWQSFLEKGRFEGGMPEVPPRREWCVWDF.

A C3H1-type zinc finger spans residues 1 to 25 (MTVCRFWQQGYCRNGNACKFEHPPK). A coiled-coil region spans residues 114–141 (QGALNEIQAAYQAAQQQIQNTLQNIPAA). Residues 161-297 (ESSKGSSTGG…SALGPKPGAF (137 aa)) form a disordered region. SXFG repeat units lie at residues 171-174 (SVFG), 200-203 (SAFG), 213-216 (SAFG), 228-231 (SAFG), 240-243 (SAFG), 249-252 (STFG), 262-265 (SAFG), 282-285 (SAFG), 303-306 (SAFG), and 314-317 (SPFG). The span at 195 to 215 (STPSTSAFGQPSPLGQKSSAF) shows a compositional bias: polar residues. Residues 243–253 (GSPQTGSTFGQ) are compositionally biased toward polar residues. Positions 315–463 (PFGAAAQATQ…DLLSYATKNP (149 aa)) are disordered. Polar residues-rich tracts occupy residues 321–338 (QATQPANPFGQPSQQAAN) and 351–366 (GQPSTTTAQNPFGQPS). SXFG repeat units lie at residues 348 to 351 (SAFG), 370 to 373 (SAFG), 387 to 390 (SLFG), and 407 to 410 (SAFG). Residues 367–385 (TQSSAFGQQQPQQAGTFGS) are compositionally biased toward low complexity. The segment covering 388–429 (LFGQQQQQPSNVFGQPSTTSAFGSQAATSGFSQLGNATSTIG) has biased composition (polar residues). Low complexity predominate over residues 430 to 443 (ASPAGAQAPASKSP).

As to quaternary structure, the nuclear pore complex (NPC) constitutes the exclusive means of nucleocytoplasmic transport. NPCs allow the passive diffusion of ions and small molecules and the active, nuclear transport receptor-mediated bidirectional transport of macromolecules such as proteins, RNAs, ribonucleoparticles (RNPs), and ribosomal subunits across the nuclear envelope. The 55-60 MDa NPC is composed of at least 28 different subunits: AMO1, ELYS, GLE1, GLE2, MLP1, NDC1, NIC96, NSP1, NUP133, NUP145, NUP152, NUP159, NUP170, NUP188, NUP192, NUP37, NUP49, NUP53, NUP56, NUP57, NUP82, NUP84, NUP85, POM152, POM33, POM34, SEC13 and SEH1. Due to its 8-fold rotational symmetry, all subunits are present with 8 copies or multiples thereof.

It localises to the nucleus. The protein resides in the nuclear pore complex. Its subcellular location is the nucleus membrane. Its function is as follows. Functions as a component of the nuclear pore complex (NPC). NPC components, collectively referred to as nucleoporins (NUPs), can play the role of both NPC structural components and of docking or interaction partners for transiently associated nuclear transport factors. Active directional transport is assured by both, a Phe-Gly (FG) repeat affinity gradient for these transport factors across the NPC and a transport cofactor concentration gradient across the nuclear envelope (GSP1 and GSP2 GTPases associated predominantly with GTP in the nucleus, with GDP in the cytoplasm). AMO1 is specifically important for nuclear protein and mRNA export. The protein is Nucleoporin AMO1 (AMO1) of Chaetomium thermophilum (strain DSM 1495 / CBS 144.50 / IMI 039719) (Thermochaetoides thermophila).